Here is a 108-residue protein sequence, read N- to C-terminus: PTS system fructose-like EIIB component 1 (108 aa).

Positions 1–101 (MSKKLIALCA…AAGIIKEIEE (101 aa)) constitute a PTS EIIB type-2 domain. The active-site Phosphocysteine intermediate is the cysteine 11. Cysteine 11 carries the phosphocysteine; by EIIA modification.

The protein resides in the cytoplasm. It catalyses the reaction D-fructose(out) + N(pros)-phospho-L-histidyl-[protein] = D-fructose 1-phosphate(in) + L-histidyl-[protein]. The phosphoenolpyruvate-dependent sugar phosphotransferase system (sugar PTS), a major carbohydrate active transport system, catalyzes the phosphorylation of incoming sugar substrates concomitantly with their translocation across the cell membrane. The enzyme II FryABC PTS system is involved in fructose transport. In Shigella flexneri, this protein is PTS system fructose-like EIIB component 1 (fryB).